The sequence spans 315 residues: Porphobilinogen deaminase (315 aa).

Residue Cys234 is modified to S-(dipyrrolylmethanemethyl)cysteine.

The protein belongs to the HMBS family. As to quaternary structure, monomer. Dipyrromethane is required as a cofactor.

The enzyme catalyses 4 porphobilinogen + H2O = hydroxymethylbilane + 4 NH4(+). It participates in porphyrin-containing compound metabolism; protoporphyrin-IX biosynthesis; coproporphyrinogen-III from 5-aminolevulinate: step 2/4. Functionally, tetrapolymerization of the monopyrrole PBG into the hydroxymethylbilane pre-uroporphyrinogen in several discrete steps. This is Porphobilinogen deaminase from Mycobacterium avium (strain 104).